A 466-amino-acid polypeptide reads, in one-letter code: Probable agmatine/putrescine antiporter AguD (466 aa).

Helical transmembrane passes span 8–28 (FSLF…EAAA), 30–50 (VAAI…AFLL), 85–105 (ASWF…VLCP), 120–140 (ISLL…LYPV), 144–164 (VWIL…LGGL), 192–212 (LSFI…CTFA), 226–246 (IIIG…GIGV), 273–293 (WFIS…MVSW), 325–345 (WGAA…APLL), 350–370 (LFWS…IPVF), 398–418 (VYMA…AIPL), and 426–446 (TEQL…ELII).

This sequence belongs to the amino acid-polyamine-organocation (APC) superfamily. Glutamate:GABA antiporter (GGA) (TC 2.A.3.7) family.

The protein localises to the cell membrane. In terms of biological role, probably catalyzes agmatine/putrescine exchange. This is Probable agmatine/putrescine antiporter AguD from Lactococcus lactis subsp. lactis (strain IL1403) (Streptococcus lactis).